Consider the following 310-residue polypeptide: Oxygen-dependent coproporphyrinogen-III oxidase (310 aa).

Ser-97 is a substrate binding site. 2 residues coordinate a divalent metal cation: His-101 and His-111. His-111 functions as the Proton donor in the catalytic mechanism. Residue 113–115 participates in substrate binding; that stretch reads NFR. 2 residues coordinate a divalent metal cation: His-150 and His-180. The important for dimerization stretch occupies residues 245-280; sequence YVEFNLLYDRGTRFGLEFGGRTESILMSLPPRVVWR. Substrate is bound at residue 263 to 265; sequence GGR.

This sequence belongs to the aerobic coproporphyrinogen-III oxidase family. Homodimer. A divalent metal cation is required as a cofactor.

It localises to the cytoplasm. The catalysed reaction is coproporphyrinogen III + O2 + 2 H(+) = protoporphyrinogen IX + 2 CO2 + 2 H2O. Its pathway is porphyrin-containing compound metabolism; protoporphyrin-IX biosynthesis; protoporphyrinogen-IX from coproporphyrinogen-III (O2 route): step 1/1. Functionally, involved in the heme biosynthesis. Catalyzes the aerobic oxidative decarboxylation of propionate groups of rings A and B of coproporphyrinogen-III to yield the vinyl groups in protoporphyrinogen-IX. In Coxiella burnetii (strain RSA 331 / Henzerling II), this protein is Oxygen-dependent coproporphyrinogen-III oxidase.